The chain runs to 184 residues: GTP cyclohydrolase 1 (184 aa).

The Zn(2+) site is built by Cys75, His78, and Cys146.

This sequence belongs to the GTP cyclohydrolase I family. Homomer.

It carries out the reaction GTP + H2O = 7,8-dihydroneopterin 3'-triphosphate + formate + H(+). It functions in the pathway cofactor biosynthesis; 7,8-dihydroneopterin triphosphate biosynthesis; 7,8-dihydroneopterin triphosphate from GTP: step 1/1. This is GTP cyclohydrolase 1 from Streptococcus pneumoniae (strain ATCC 700669 / Spain 23F-1).